Reading from the N-terminus, the 132-residue chain is Translation initiation factor 5A (132 aa).

K37 is subject to Hypusine.

This sequence belongs to the eIF-5A family.

Its subcellular location is the cytoplasm. In terms of biological role, functions by promoting the formation of the first peptide bond. The polypeptide is Translation initiation factor 5A (eif5a) (Methanocaldococcus jannaschii (strain ATCC 43067 / DSM 2661 / JAL-1 / JCM 10045 / NBRC 100440) (Methanococcus jannaschii)).